Consider the following 103-residue polypeptide: Large ribosomal subunit protein bL21 (103 aa).

It belongs to the bacterial ribosomal protein bL21 family. Part of the 50S ribosomal subunit. Contacts protein L20.

Its function is as follows. This protein binds to 23S rRNA in the presence of protein L20. The polypeptide is Large ribosomal subunit protein bL21 (Methylococcus capsulatus (strain ATCC 33009 / NCIMB 11132 / Bath)).